Reading from the N-terminus, the 411-residue chain is Glutamate dehydrogenase (411 aa).

The active site involves Lys-102.

This sequence belongs to the Glu/Leu/Phe/Val dehydrogenases family.

It catalyses the reaction L-glutamate + NAD(+) + H2O = 2-oxoglutarate + NH4(+) + NADH + H(+). The catalysed reaction is L-glutamate + NADP(+) + H2O = 2-oxoglutarate + NH4(+) + NADPH + H(+). In Zea mays (Maize), this protein is Glutamate dehydrogenase (GDH1).